Consider the following 228-residue polypeptide: Cytokinin riboside 5'-monophosphate phosphoribohydrolase LOG5 (228 aa).

Substrate contacts are provided by residues E79, 97–98, and 114–120; these read RK and GYGTLEE.

It belongs to the LOG family. In terms of tissue distribution, expressed in roots and shoots. Detected in vascular tissues of roots, cotyledons, and leaves, axillary buds, immature and mature flowers, fruit abscission zones and ovules.

The protein localises to the cytoplasm. The protein resides in the nucleus. It carries out the reaction N(6)-(dimethylallyl)adenosine 5'-phosphate + H2O = N(6)-dimethylallyladenine + D-ribose 5-phosphate. It catalyses the reaction 9-ribosyl-trans-zeatin 5'-phosphate + H2O = trans-zeatin + D-ribose 5-phosphate. Cytokinin-activating enzyme working in the direct activation pathway. Phosphoribohydrolase that converts inactive cytokinin nucleotides to the biologically active free-base forms. The protein is Cytokinin riboside 5'-monophosphate phosphoribohydrolase LOG5 (LOG5) of Arabidopsis thaliana (Mouse-ear cress).